A 323-amino-acid polypeptide reads, in one-letter code: AA9 family lytic polysaccharide monooxygenase A (323 aa).

Positions 1-19 are cleaved as a signal peptide; it reads MKSFISLLGLSFLTCHASA. Cu(2+) is bound by residues H20 and H90. The cysteines at positions 59 and 175 are disulfide-linked. H161 and Q170 together coordinate O2. Y172 is a binding site for Cu(2+). N-linked (GlcNAc...) asparagine glycosylation is present at N215. Residues 287–323 form the CBM1 domain; that stretch reads AVVQKFGQCGGQGWTGGTTCVAGSTCTATNAYYSQCL.

It belongs to the polysaccharide monooxygenase AA9 family. Requires Cu(2+) as cofactor.

It localises to the secreted. It catalyses the reaction [(1-&gt;4)-beta-D-glucosyl]n+m + reduced acceptor + O2 = 4-dehydro-beta-D-glucosyl-[(1-&gt;4)-beta-D-glucosyl]n-1 + [(1-&gt;4)-beta-D-glucosyl]m + acceptor + H2O.. Functionally, lytic polysaccharide monooxygenase (LPMO) that depolymerizes crystalline and amorphous polysaccharides via the oxidation of scissile alpha- or beta-(1-4)-glycosidic bonds, yielding C1 and C4 oxidation products. Catalysis by LPMOs requires the reduction of the active-site copper from Cu(II) to Cu(I) by a reducing agent and H(2)O(2) or O(2) as a cosubstrate. The protein is AA9 family lytic polysaccharide monooxygenase A of Botryotinia fuckeliana (strain B05.10) (Noble rot fungus).